The following is a 289-amino-acid chain: Phosphatidylserine decarboxylase proenzyme (289 aa).

Catalysis depends on charge relay system; for autoendoproteolytic cleavage activity residues Asp89, His146, and Ser252. The active-site Schiff-base intermediate with substrate; via pyruvic acid; for decarboxylase activity is Ser252. Ser252 bears the Pyruvic acid (Ser); by autocatalysis mark.

This sequence belongs to the phosphatidylserine decarboxylase family. PSD-B subfamily. Prokaryotic type I sub-subfamily. In terms of assembly, heterodimer of a large membrane-associated beta subunit and a small pyruvoyl-containing alpha subunit. Pyruvate is required as a cofactor. Post-translationally, is synthesized initially as an inactive proenzyme. Formation of the active enzyme involves a self-maturation process in which the active site pyruvoyl group is generated from an internal serine residue via an autocatalytic post-translational modification. Two non-identical subunits are generated from the proenzyme in this reaction, and the pyruvate is formed at the N-terminus of the alpha chain, which is derived from the carboxyl end of the proenzyme. The autoendoproteolytic cleavage occurs by a canonical serine protease mechanism, in which the side chain hydroxyl group of the serine supplies its oxygen atom to form the C-terminus of the beta chain, while the remainder of the serine residue undergoes an oxidative deamination to produce ammonia and the pyruvoyl prosthetic group on the alpha chain. During this reaction, the Ser that is part of the protease active site of the proenzyme becomes the pyruvoyl prosthetic group, which constitutes an essential element of the active site of the mature decarboxylase.

It localises to the cell membrane. The enzyme catalyses a 1,2-diacyl-sn-glycero-3-phospho-L-serine + H(+) = a 1,2-diacyl-sn-glycero-3-phosphoethanolamine + CO2. Its pathway is phospholipid metabolism; phosphatidylethanolamine biosynthesis; phosphatidylethanolamine from CDP-diacylglycerol: step 2/2. Functionally, catalyzes the formation of phosphatidylethanolamine (PtdEtn) from phosphatidylserine (PtdSer). This is Phosphatidylserine decarboxylase proenzyme from Shewanella sp. (strain W3-18-1).